Consider the following 141-residue polypeptide: Hemoglobin subunit alpha-3 (141 aa).

The 141-residue stretch at 1–141 folds into the Globin domain; the sequence is VLSPADKTNV…VSTVLTSKYR (141 aa). Residue His-58 coordinates O2. His-87 lines the heme b pocket.

It belongs to the globin family. Heterotetramer of two alpha chains and two beta chains. As to expression, red blood cells.

Involved in oxygen transport from the lung to the various peripheral tissues. This is Hemoglobin subunit alpha-3 from Pan troglodytes (Chimpanzee).